We begin with the raw amino-acid sequence, 347 residues long: NADH-ubiquinone oxidoreductase chain 2 (347 aa).

10 helical membrane passes run 3–23, 25–45, 59–79, 96–116, 127–147, 150–170, 193–213, 240–260, 274–294, and 323–343; these read PIIL…TMIS, HWLL…PILM, YFLT…INTA, LVTM…FWVP, GMLL…QIFP, NPNI…WGGL, ILMY…MLTI, ITLT…LTGF, SNIM…YFYM, and IFLL…SPAL.

The protein belongs to the complex I subunit 2 family. As to quaternary structure, core subunit of respiratory chain NADH dehydrogenase (Complex I) which is composed of 45 different subunits. Interacts with TMEM242.

It is found in the mitochondrion inner membrane. It carries out the reaction a ubiquinone + NADH + 5 H(+)(in) = a ubiquinol + NAD(+) + 4 H(+)(out). In terms of biological role, core subunit of the mitochondrial membrane respiratory chain NADH dehydrogenase (Complex I) which catalyzes electron transfer from NADH through the respiratory chain, using ubiquinone as an electron acceptor. Essential for the catalytic activity and assembly of complex I. This chain is NADH-ubiquinone oxidoreductase chain 2, found in Lemur catta (Ring-tailed lemur).